The sequence spans 155 residues: Small ribosomal subunit protein uS7 (155 aa).

Belongs to the universal ribosomal protein uS7 family. In terms of assembly, part of the 30S ribosomal subunit. Contacts proteins S9 and S11.

In terms of biological role, one of the primary rRNA binding proteins, it binds directly to 16S rRNA where it nucleates assembly of the head domain of the 30S subunit. Is located at the subunit interface close to the decoding center, probably blocks exit of the E-site tRNA. This Corynebacterium diphtheriae (strain ATCC 700971 / NCTC 13129 / Biotype gravis) protein is Small ribosomal subunit protein uS7.